The sequence spans 64 residues: Prokaryotic ubiquitin-like protein Pup (64 aa).

A disordered region spans residues 1-37 (MAQEQTKRGGGGGDDDDIAGSTAAGQERREKLTEETD). The ARC ATPase binding stretch occupies residues 21-58 (STAAGQERREKLTEETDDLLDEIDDVLEENAEDFVRAY). A coiled-coil region spans residues 23–52 (AAGQERREKLTEETDDLLDEIDDVLEENAE). Glutamine 64 is modified (deamidated glutamine). Glutamine 64 participates in a covalent cross-link: Isoglutamyl lysine isopeptide (Gln-Lys) (interchain with K-? in acceptor proteins).

The protein belongs to the prokaryotic ubiquitin-like protein family. Strongly interacts with the proteasome-associated ATPase ARC through a hydrophobic interface; the interacting region of Pup lies in its C-terminal half. There is one Pup binding site per ARC hexamer ring. Is modified by deamidation of its C-terminal glutamine to glutamate by the deamidase Dop, a prerequisite to the subsequent pupylation process.

It functions in the pathway protein degradation; proteasomal Pup-dependent pathway. Functionally, protein modifier that is covalently attached to lysine residues of substrate proteins, thereby targeting them for proteasomal degradation. The tagging system is termed pupylation. This chain is Prokaryotic ubiquitin-like protein Pup, found in Mycobacterium tuberculosis (strain ATCC 25177 / H37Ra).